The primary structure comprises 119 residues: Beta-2-microglobulin (119 aa).

An N-terminal signal peptide occupies residues 1–20 (MACSVVVALLALLSLSGLEA). An Ig-like C1-type domain is found at 25–114 (PKIQVYSRHP…VTFSTPKTVK (90 aa)). Residues C45 and C100 are joined by a disulfide bond.

This sequence belongs to the beta-2-microglobulin family. Heterodimer of an alpha chain and a beta chain. Beta-2-microglobulin is the beta-chain of major histocompatibility complex class I molecules.

Its subcellular location is the secreted. Its function is as follows. Component of the class I major histocompatibility complex (MHC). Involved in the presentation of peptide antigens to the immune system. This Mico emiliae (Emilia's marmoset) protein is Beta-2-microglobulin (B2M).